Consider the following 193-residue polypeptide: MRLCDRDIEAWLDNGKLGIDPRPPVERINGATVDVRLGNQFRTFRGHTAAFIDLSGPKAEVSAALDRVMSDEIVLPEGDAFFLHPGELALAVTLESVTLPDDLVGWLDGRSSLARLGLMVHVTAHRIDPGWQGRIVLEFYNSGKLPLALRPGMLIGALSFEPLSGPAARPYNSRQDAKYKGQQGAVASRIDKD.

DCTP-binding positions include 110–115 (RSSLAR), aspartate 128, 136–138 (VLE), tyrosine 171, lysine 178, and glutamine 182. The Proton donor/acceptor role is filled by glutamate 138. A disordered region spans residues 169 to 193 (RPYNSRQDAKYKGQQGAVASRIDKD).

This sequence belongs to the dCTP deaminase family. As to quaternary structure, homotrimer.

It catalyses the reaction dCTP + H2O + H(+) = dUTP + NH4(+). It participates in pyrimidine metabolism; dUMP biosynthesis; dUMP from dCTP (dUTP route): step 1/2. Catalyzes the deamination of dCTP to dUTP. The polypeptide is dCTP deaminase (Erwinia tasmaniensis (strain DSM 17950 / CFBP 7177 / CIP 109463 / NCPPB 4357 / Et1/99)).